The following is a 448-amino-acid chain: Ribosome biogenesis protein YTM1 (448 aa).

The tract at residues 5-86 (TSNQAVVFST…EETLEIEYIE (82 aa)) is ubiquitin-like (UBL) domain. WD repeat units lie at residues 98–136 (PHESWVSAVSCSLPTHFLTTAYDGHLRAFDLSKNVTLDA), 191–230 (LHTAPVSSIAANPSGTQLLTSSWDSLIGVWDTTIPPKHEV), 271–309 (SHIGRVSKVAWLSPTQGVSCGFDSTLRTWDVERGLCTRT), 312–351 (ASEKPFLDLAVNVENQTALTVSTDRTMTLYDLRTEEALSA), 357–397 (LHPA…AAIS), and 403–439 (DGTKKVLAVDWKRGVIGIGGEGGLDVWKVGLENETQG). The tract at residues 225–261 (PPKHEVPEPTITAADQRTKKRRKVDPSSGDSSSPTAI) is disordered.

This sequence belongs to the WD repeat WDR12/YTM1 family. As to quaternary structure, component of the NOP7 complex, composed of ERB1, NOP7 and YTM1. The complex is held together by ERB1, which interacts with NOP7 via its N-terminal domain and with YTM1 via a high-affinity interaction between the seven-bladed beta-propeller domains of the 2 proteins. The NOP7 complex associates with the 66S pre-ribosome. Interacts (via UBL domain) with MDN1 (via VWFA/MIDAS domain).

Its subcellular location is the nucleus. The protein localises to the nucleolus. It localises to the nucleoplasm. Functionally, component of the NOP7 complex, which is required for maturation of the 25S and 5.8S ribosomal RNAs and formation of the 60S ribosome. This chain is Ribosome biogenesis protein YTM1, found in Coprinopsis cinerea (strain Okayama-7 / 130 / ATCC MYA-4618 / FGSC 9003) (Inky cap fungus).